We begin with the raw amino-acid sequence, 150 residues long: Dihydroneopterin triphosphate diphosphatase (150 aa).

One can recognise a Nudix hydrolase domain in the interval 5 to 146; the sequence is VYKRPVSILV…SNRQAIEQFV (142 aa). The substrate site is built by Lys-7, Arg-29, and Thr-40. The short motif at 41–62 is the Nudix box element; that stretch reads GSVEEGETAPQAAMREVKEEVT. 2 residues coordinate Mg(2+): Glu-56 and Glu-60. 81-84 serves as a coordination point for substrate; that stretch reads FEIF. A Mg(2+)-binding site is contributed by Glu-117. Ser-135 is a substrate binding site.

Belongs to the Nudix hydrolase family. The cofactor is Mg(2+).

It carries out the reaction 7,8-dihydroneopterin 3'-triphosphate + H2O = 7,8-dihydroneopterin 3'-phosphate + diphosphate + H(+). Its function is as follows. Catalyzes the hydrolysis of dihydroneopterin triphosphate to dihydroneopterin monophosphate and pyrophosphate. Required for efficient folate biosynthesis. Can also hydrolyze nucleoside triphosphates with a preference for dATP. The sequence is that of Dihydroneopterin triphosphate diphosphatase (nudB) from Escherichia coli O157:H7.